A 541-amino-acid chain; its full sequence is 2-hydroxyacylsphingosine 1-beta-galactosyltransferase (541 aa).

An N-terminal signal peptide occupies residues methionine 1–alanine 20. N-linked (GlcNAc...) asparagine glycosylation is found at asparagine 78, asparagine 333, and asparagine 442. Residues tyrosine 472 to leucine 492 form a helical membrane-spanning segment.

This sequence belongs to the UDP-glycosyltransferase family.

Its subcellular location is the membrane. It localises to the endoplasmic reticulum. It carries out the reaction an N-acylsphing-4-enine + UDP-alpha-D-galactose = a beta-D-galactosyl-(1&lt;-&gt;1')-N-acylsphing-4-enine + UDP + H(+). It catalyses the reaction an N-acyl-sphingoid base + UDP-alpha-D-galactose = a D-galactosylceramide + UDP + H(+). The catalysed reaction is N-(2-hydroxy-hexanoyl)-sphing-4-enine + UDP-alpha-D-galactose = N-(2-hydroxy-hexanoyl)-beta-D-galactosyl-sphing-4-enine + UDP + H(+). The enzyme catalyses N-(2-hydroxy-hexanoyl)-sphinganine + UDP-alpha-D-galactose = N-(2-hydroxyhexanoyl)-beta-D-galactosylsphinganine + UDP + H(+). It functions in the pathway sphingolipid metabolism; galactosylceramide biosynthesis. Its function is as follows. Catalyzes the transfer of galactose to ceramide, a key enzymatic step in the biosynthesis of galactocerebrosides, which are abundant sphingolipids of the myelin membrane of the central nervous system and peripheral nervous system. Galactosylates both hydroxy- and non-hydroxy fatty acid-containing ceramides and diglycerides. The protein is 2-hydroxyacylsphingosine 1-beta-galactosyltransferase of Homo sapiens (Human).